Consider the following 95-residue polypeptide: MEDERIKLLFKEKALEILMTIYYESLGGNDVYIQYIASKVNSPHSYVWLIIKKFEEAKMVECELEGRTKIIRLTDKGQKIAQQIKSIIDIMENDT.

This is an uncharacterized protein from Archaeoglobus fulgidus (strain ATCC 49558 / DSM 4304 / JCM 9628 / NBRC 100126 / VC-16).